A 371-amino-acid chain; its full sequence is tRNA-specific 2-thiouridylase MnmA (371 aa).

ATP contacts are provided by residues 13 to 20 (GMSGGVDS) and Met-39. An interaction with target base in tRNA region spans residues 99 to 101 (NPD). The Nucleophile role is filled by Cys-104. Cys-104 and Cys-200 are oxidised to a cystine. Gly-128 contributes to the ATP binding site. The interaction with tRNA stretch occupies residues 150 to 152 (KDQ). The active-site Cysteine persulfide intermediate is Cys-200. The tract at residues 308-309 (RY) is interaction with tRNA.

It belongs to the MnmA/TRMU family.

It is found in the cytoplasm. The enzyme catalyses S-sulfanyl-L-cysteinyl-[protein] + uridine(34) in tRNA + AH2 + ATP = 2-thiouridine(34) in tRNA + L-cysteinyl-[protein] + A + AMP + diphosphate + H(+). Its function is as follows. Catalyzes the 2-thiolation of uridine at the wobble position (U34) of tRNA, leading to the formation of s(2)U34. The polypeptide is tRNA-specific 2-thiouridylase MnmA (Bacillus anthracis).